The sequence spans 149 residues: SsrA-binding protein (149 aa).

A disordered region spans residues 121–149 (GKKQHDKRADELDKDSKREAQRAMKERQR). Residues 127-149 (KRADELDKDSKREAQRAMKERQR) are compositionally biased toward basic and acidic residues.

It belongs to the SmpB family.

The protein localises to the cytoplasm. In terms of biological role, required for rescue of stalled ribosomes mediated by trans-translation. Binds to transfer-messenger RNA (tmRNA), required for stable association of tmRNA with ribosomes. tmRNA and SmpB together mimic tRNA shape, replacing the anticodon stem-loop with SmpB. tmRNA is encoded by the ssrA gene; the 2 termini fold to resemble tRNA(Ala) and it encodes a 'tag peptide', a short internal open reading frame. During trans-translation Ala-aminoacylated tmRNA acts like a tRNA, entering the A-site of stalled ribosomes, displacing the stalled mRNA. The ribosome then switches to translate the ORF on the tmRNA; the nascent peptide is terminated with the 'tag peptide' encoded by the tmRNA and targeted for degradation. The ribosome is freed to recommence translation, which seems to be the essential function of trans-translation. This Dechloromonas aromatica (strain RCB) protein is SsrA-binding protein.